The chain runs to 419 residues: L-rhamnose isomerase (419 aa).

Positions 262, 294, and 296 each coordinate Mn(2+).

This sequence belongs to the rhamnose isomerase family. In terms of assembly, homotetramer. It depends on Mn(2+) as a cofactor.

Its subcellular location is the cytoplasm. It catalyses the reaction L-rhamnopyranose = L-rhamnulose. The protein operates within carbohydrate degradation; L-rhamnose degradation; glycerone phosphate from L-rhamnose: step 1/3. Catalyzes the interconversion of L-rhamnose and L-rhamnulose. The sequence is that of L-rhamnose isomerase from Shigella boydii serotype 4 (strain Sb227).